The primary structure comprises 408 residues: NADH-quinone oxidoreductase subunit H (408 aa).

9 consecutive transmembrane segments (helical) span residues 18 to 38 (LAKA…AILI), 84 to 104 (PIYL…FSVI), 124 to 144 (LPVA…GIVL), 165 to 185 (VVSY…YAGT), 198 to 218 (TWFV…MVGE), 261 to 281 (SALA…FNLI), 288 to 308 (WWPL…YFWL), 321 to 341 (MALG…VVAI), and 353 to 373 (WAAW…WGLA). The tract at residues 381–408 (VQPPPPQSTGAYPVPPLPSVGTKETADA) is disordered. Over residues 382 to 398 (QPPPPQSTGAYPVPPLP) the composition is skewed to pro residues.

This sequence belongs to the complex I subunit 1 family. As to quaternary structure, NDH-1 is composed of 14 different subunits. Subunits NuoA, H, J, K, L, M, N constitute the membrane sector of the complex.

The protein localises to the cell membrane. It catalyses the reaction a quinone + NADH + 5 H(+)(in) = a quinol + NAD(+) + 4 H(+)(out). Its function is as follows. NDH-1 shuttles electrons from NADH, via FMN and iron-sulfur (Fe-S) centers, to quinones in the respiratory chain. The immediate electron acceptor for the enzyme in this species is believed to be menaquinone. Couples the redox reaction to proton translocation (for every two electrons transferred, four hydrogen ions are translocated across the cytoplasmic membrane), and thus conserves the redox energy in a proton gradient. This subunit may bind ubiquinone. This Mycolicibacterium smegmatis (strain ATCC 700084 / mc(2)155) (Mycobacterium smegmatis) protein is NADH-quinone oxidoreductase subunit H.